Here is a 376-residue protein sequence, read N- to C-terminus: TATA box-binding protein-like 2 (376 aa).

The disordered stretch occupies residues 103–184; that stretch reads PDEVTQENKD…SDSLSLASIT (82 aa). Basic and acidic residues predominate over residues 108-122; the sequence is QENKDQPVISKHETE. A compositionally biased stretch (low complexity) spans 126–159; it reads ESQSPQSRLPSPSEQDVGLGLNSSSLSNSHSQLH. Positions 175–184 are enriched in polar residues; it reads SDSLSLASIT.

The protein belongs to the TBP family. As to quaternary structure, interacts with TAF3.

It is found in the cytoplasm. Its subcellular location is the nucleus. In terms of biological role, transcription factor required in complex with TAF3 for the differentiation of myoblasts into myocytes. The complex replaces TFIID at specific promoters at an early stage in the differentiation process. The sequence is that of TATA box-binding protein-like 2 from Pan troglodytes (Chimpanzee).